A 550-amino-acid polypeptide reads, in one-letter code: Glucose import ATP-binding protein TsgD13 (550 aa).

2 ABC transporter domains span residues 7–270 (LRME…VGRE) and 287–533 (LRAR…TGGG). 39–46 (GENGAGKS) lines the ATP pocket. The tract at residues 529 to 550 (MTGGGDATATAGAQVRGLGGSS) is disordered.

This sequence belongs to the ABC transporter superfamily. As to quaternary structure, the complex is composed of two ATP-binding proteins (TsgD13), two transmembrane proteins (TsgB13 and TsgC13) and a solute-binding protein (TsgA13).

Its subcellular location is the cell membrane. It catalyses the reaction D-glucose(out) + ATP + H2O = D-glucose(in) + ADP + phosphate + H(+). Functionally, part of an ABC transporter complex involved in glucose import. Responsible for energy coupling to the transport system. The sequence is that of Glucose import ATP-binding protein TsgD13 (tsgD13) from Haloferax volcanii (strain ATCC 29605 / DSM 3757 / JCM 8879 / NBRC 14742 / NCIMB 2012 / VKM B-1768 / DS2) (Halobacterium volcanii).